The sequence spans 570 residues: Multidrug and toxin extrusion protein 1 (570 aa).

At M1 the chain carries N-acetylmethionine. Topologically, residues 1-37 (MEAPEEPAPVRGGPEATLEVRGSRCLRLSAFREELRA) are cytoplasmic. The chain crosses the membrane as a helical span at residues 38 to 58 (LLVLAGPAFLVQLMVFLISFI). Over 59–72 (SSVFCGHLGKLELD) the chain is Extracellular. A helical transmembrane segment spans residues 73 to 93 (AVTLAIAVINVTGVSVGFGLS). At 94-123 (SACDTLISQTYGSQNLKHVGVILQRSALVL) the chain is on the cytoplasmic side. The helical transmembrane segment at 124–144 (LLCCFPCWALFLNTQHILLLF) threads the bilayer. The Extracellular portion of the chain corresponds to 145–152 (RQDPDVSR). The chain crosses the membrane as a helical span at residues 153-173 (LTQTYVTIFIPALPATFLYML). Over 174-176 (QVK) the chain is Cytoplasmic. Residues 177–197 (YLLNQGIVLPQIVTGVAANLV) form a helical membrane-spanning segment. Residues 198-216 (NALANYLFLHQLHLGVIGS) are Extracellular-facing. The chain crosses the membrane as a helical span at residues 217-237 (ALANLISQYTLALLLFLYILG). The Cytoplasmic segment spans residues 238–256 (KKLHQATWGGWSLECLQDW). A helical membrane pass occupies residues 257–276 (ASFLRLAIPSMLMLCMEWWA). The Extracellular portion of the chain corresponds to 277 to 295 (YEVGSFLSGILGMVELGAQ). Residues 296 to 316 (SIVYELAIIVYMVPAGFSVAA) form a helical membrane-spanning segment. The Cytoplasmic segment spans residues 317-336 (SVRVGNALGAGDMEQARKSS). Residues 337–357 (TVSLLITVLFAVAFSVLLLSC) form a helical membrane-spanning segment. Over 358–370 (KDHVGYIFTTDRD) the chain is Extracellular. A helical transmembrane segment spans residues 371-391 (IINLVAQVVPIYAVSHLFEAL). Residues 392-408 (ACTSGGVLRGSGNQKVG) lie on the Cytoplasmic side of the membrane. Residues 409 to 429 (AIVNTIGYYVVGLPIGIALMF) traverse the membrane as a helical segment. The Extracellular portion of the chain corresponds to 430-437 (ATTLGVMG). Residues 438-458 (LWSGIIICTVFQAVCFLGFII) form a helical membrane-spanning segment. Residues 459–546 (QLNWKKACQQ…LSRKQLVLRR (88 aa)) lie on the Cytoplasmic side of the membrane. The interval 508–534 (DVGKTGEPQSDQQMRQEEPLPEHPQDG) is disordered. Over residues 521–533 (MRQEEPLPEHPQD) the composition is skewed to basic and acidic residues. Residues 547–567 (GLLLLGVFLILLVGILVRFYV) traverse the membrane as a helical segment. Over 568 to 570 (RIQ) the chain is Extracellular.

The protein belongs to the multi antimicrobial extrusion (MATE) (TC 2.A.66.1) family. In terms of tissue distribution, widely expressed. The highest expression is found in adrenal gland, and to a lower extent in liver, skeletal muscle and kidney. In testis, primarily localized throughout the adluminal compartment of the seminiferous tubules with expression at the peritubular myoid cells and Leydig cells.

It is found in the cell membrane. Its subcellular location is the apical cell membrane. It catalyses the reaction thiamine(out) + H(+)(in) = thiamine(in) + H(+)(out). It carries out the reaction estrone 3-sulfate(in) + H(+)(out) = estrone 3-sulfate(out) + H(+)(in). The enzyme catalyses creatinine(in) + H(+)(out) = creatinine(out) + H(+)(in). The catalysed reaction is agmatine(in) + H(+)(out) = agmatine(out) + H(+)(in). Multidrug efflux pump that functions as a H(+)/organic cation antiporter. Plays a physiological role in the excretion of cationic compounds including endogenous metabolites, drugs, toxins through the kidney and liver, into urine and bile respectively. Mediates the efflux of endogenous compounds such as creatinine, vitamin B1/thiamine, agmatine and estrone-3-sulfate. May also contribute to regulate the transport of cationic compounds in testis across the blood-testis-barrier. The polypeptide is Multidrug and toxin extrusion protein 1 (Homo sapiens (Human)).